We begin with the raw amino-acid sequence, 541 residues long: Circadian clock oscillator protein KaiC (541 aa).

The disordered stretch occupies residues 1–40 (MNQSLGPSEPEKPQDNTAEDSTEPTPDNHRADLSELRGIP). KaiC domains are found at residues 21 to 268 (STEP…INIF) and 282 to 541 (VRVS…EEGL). Over residues 26 to 35 (PDNHRADLSE) the composition is skewed to basic and acidic residues. ATP is bound by residues G70, T71, G72, K73, T74, L75, S110, K245, L246, R247, T249, H251, T261, T311, G312, T313, G314, K315, and T316. Residue T74 participates in Mg(2+) binding. Residues T316 and E339 each contribute to the Mg(2+) site. W352 contacts ATP. Phosphoserine; by autocatalysis is present on S452. A Phosphothreonine; by autocatalysis modification is found at T453. The ATP site is built by R472, K478, M479, R480, S482, H484, and K486.

It belongs to the KaiC family. In terms of assembly, homohexamer; hexamerization is dependent on ATP-binding. The KaiABC complex composition changes during the circadian cycle to control KaiC phosphorylation. Complexes KaiC(6), KaiA(2-4):KaiC(6), KaiB(6):KaiC(6) and KaiC(6):KaiB(6):KaiA(12) are among the most important forms, many form cooperatively. KaiC interacts with SasA, activating its autokinase function and leading to RpaA activation. Mg(2+) is required as a cofactor. Post-translationally, phosphorylated on serine and threonine residues by autocatalysis. Has a 4 step phosphorylation cycle; the autokinase acts first on Thr-453, then Ser-452. When Ser-452 is modified KaiC switches to an autophosphatase mode, acting first on phospho-Thr-453 then phospho-Ser-452.

The catalysed reaction is L-seryl-[protein] + ATP = O-phospho-L-seryl-[protein] + ADP + H(+). The enzyme catalyses L-threonyl-[protein] + ATP = O-phospho-L-threonyl-[protein] + ADP + H(+). It carries out the reaction ATP + H2O = ADP + phosphate + H(+). Its activity is regulated as follows. The interaction with KaiA enhances its phosphorylation status, while the interaction with KaiB decreases it. Central component of the KaiABC oscillator complex, which constitutes the main circadian regulator in cyanobacteria. Complex composition changes during the circadian cycle to control KaiC phosphorylation. KaiA stimulates KaiC autophosphorylation, while KaiB sequesters KaiA, leading to KaiC autodephosphorylation. Clock output pathways impact the RpaA transcriptional regulator. KaiC enhances the autophosphorylation activity of SasA, which then transfers its phosphate group to RpaA to activate it. KaiB and KaiC together enhance the phospho-RpaA dephosphatase activity of CikA. Its function is as follows. Has a weak, temperature-independent ATPase activity; ATPase activity defines the circadian period. The phosphorylation state of KaiC modulates its ATPase activity and effects KaiB binding. The polypeptide is Circadian clock oscillator protein KaiC (Parathermosynechococcus lividus (Thermostichus lividus)).